A 440-amino-acid chain; its full sequence is Ribosomal protein uS12 methylthiotransferase RimO (440 aa).

In terms of domain architecture, MTTase N-terminal spans Pro6–Pro116. 6 residues coordinate [4Fe-4S] cluster: Cys15, Cys51, Cys80, Cys149, Cys153, and Cys156. One can recognise a Radical SAM core domain in the interval Leu135–Ala373. One can recognise a TRAM domain in the interval Gln376–Val440.

Belongs to the methylthiotransferase family. RimO subfamily. [4Fe-4S] cluster is required as a cofactor.

The protein localises to the cytoplasm. It carries out the reaction L-aspartate(89)-[ribosomal protein uS12]-hydrogen + (sulfur carrier)-SH + AH2 + 2 S-adenosyl-L-methionine = 3-methylsulfanyl-L-aspartate(89)-[ribosomal protein uS12]-hydrogen + (sulfur carrier)-H + 5'-deoxyadenosine + L-methionine + A + S-adenosyl-L-homocysteine + 2 H(+). Its function is as follows. Catalyzes the methylthiolation of an aspartic acid residue of ribosomal protein uS12. The sequence is that of Ribosomal protein uS12 methylthiotransferase RimO from Pseudomonas paraeruginosa (strain DSM 24068 / PA7) (Pseudomonas aeruginosa (strain PA7)).